We begin with the raw amino-acid sequence, 108 residues long: Class I hydrophobin 3 (108 aa).

The first 17 residues, 1 to 17 (MFFQTTIVAALAFLAVA), serve as a signal peptide directing secretion. Cystine bridges form between Cys-28–Cys-87, Cys-35–Cys-81, Cys-36–Cys-69, and Cys-88–Cys-101. Asn-37 carries an N-linked (GlcNAc...) asparagine glycan.

This sequence belongs to the fungal hydrophobin family. Self-assembles to form functional amyloid fibrils called rodlets. Self-assembly into fibrillar rodlets occurs spontaneously at hydrophobic:hydrophilic interfaces and the rodlets further associate laterally to form amphipathic monolayers.

Its subcellular location is the secreted. The protein localises to the cell wall. In terms of biological role, aerial growth, conidiation, and dispersal of filamentous fungi in the environment rely upon a capability of their secreting small amphipathic proteins called hydrophobins (HPBs) with low sequence identity. Class I can self-assemble into an outermost layer of rodlet bundles on aerial cell surfaces, conferring cellular hydrophobicity that supports fungal growth, development and dispersal; whereas Class II form highly ordered films at water-air interfaces through intermolecular interactions but contribute nothing to the rodlet structure. Vmh3 is a class I hydrophobin that is essential for the maintenance of the surface hydrophobicity of the mycelium and might be involved in the development of fruiting bodies. Plays an important role in hyphal resistance against environmental stress. Necessary for the efficient biodegradation of lignin. The sequence is that of Class I hydrophobin 3 from Pleurotus ostreatus (Oyster mushroom).